The sequence spans 39 residues: Glutenin, high molecular weight subunit PC237 (39 aa).

This sequence belongs to the gliadin/glutenin family. In terms of assembly, disulfide-bridge linked aggregates.

Its function is as follows. Glutenins are high-molecular weight seed storage proteins of wheat endosperm. Thought to be responsible for the visco-elastic property of wheat dough. This chain is Glutenin, high molecular weight subunit PC237, found in Triticum aestivum (Wheat).